The chain runs to 123 residues: Ribosome-binding factor A (123 aa).

Belongs to the RbfA family. In terms of assembly, monomer. Binds 30S ribosomal subunits, but not 50S ribosomal subunits or 70S ribosomes.

Its subcellular location is the cytoplasm. Functionally, one of several proteins that assist in the late maturation steps of the functional core of the 30S ribosomal subunit. Associates with free 30S ribosomal subunits (but not with 30S subunits that are part of 70S ribosomes or polysomes). Required for efficient processing of 16S rRNA. May interact with the 5'-terminal helix region of 16S rRNA. In Neisseria gonorrhoeae (strain NCCP11945), this protein is Ribosome-binding factor A.